The following is a 432-amino-acid chain: Adenylosuccinate synthetase (432 aa).

Residues 13-19 (GDEGKGK) and 41-43 (GHT) contribute to the GTP site. The active-site Proton acceptor is D14. Mg(2+) is bound by residues D14 and G41. IMP is bound by residues 14-17 (DEGK), 39-42 (NAGH), T130, R144, Q225, T240, and R304. H42 functions as the Proton donor in the catalytic mechanism. 300 to 306 (ATTGRSR) contributes to the substrate binding site. Residues R306, 332-334 (KLD), and 415-417 (STG) each bind GTP.

This sequence belongs to the adenylosuccinate synthetase family. In terms of assembly, homodimer. It depends on Mg(2+) as a cofactor.

The protein localises to the cytoplasm. The catalysed reaction is IMP + L-aspartate + GTP = N(6)-(1,2-dicarboxyethyl)-AMP + GDP + phosphate + 2 H(+). Its pathway is purine metabolism; AMP biosynthesis via de novo pathway; AMP from IMP: step 1/2. In terms of biological role, plays an important role in the de novo pathway of purine nucleotide biosynthesis. Catalyzes the first committed step in the biosynthesis of AMP from IMP. This Yersinia pestis bv. Antiqua (strain Antiqua) protein is Adenylosuccinate synthetase.